We begin with the raw amino-acid sequence, 521 residues long: MGNCLAKKYGLVMKPQQNGERSVEIENRRRSTHQDPSKISTGTNQPPPWRNPAKHSGAAAILEKPYEDVKLFYTLSKELGRGQFGVTYLCTEKSTGKRFACKSISKKKLVTKGDKEDMRREIQIMQHLSGQPNIVEFKGAYEDEKAVNLVMELCAGGELFDRILAKGHYSERAAASVCRQIVNVVNICHFMGVMHRDLKPENFLLSSKDEKALIKATDFGLSVFIEEGRVYKDIVGSAYYVAPEVLKRRYGKEIDIWSAGIILYILLSGVPPFWAETEKGIFDAILEGEIDFESQPWPSISNSAKDLVRRMLTQDPKRRISAAEVLKHPWLREGGEASDKPIDSAVLSRMKQFRAMNKLKKLALKVIAENIDTEEIQGLKAMFANIDTDNSGTITYEELKEGLAKLGSRLTEAEVKQLMDAADVDGNGSIDYIEFITATMHRHRLESNENVYKAFQHFDKDGSGYITTDELEAALKEYGMGDDATIKEILSDVDADNDGRINYDEFCAMMRSGNPQQPRLF.

The N-myristoyl glycine moiety is linked to residue glycine 2. The segment at 15 to 56 is disordered; that stretch reads PQQNGERSVEIENRRRSTHQDPSKISTGTNQPPPWRNPAKHS. The segment covering 21 to 36 has biased composition (basic and acidic residues); it reads RSVEIENRRRSTHQDP. Residues 73–331 form the Protein kinase domain; it reads YTLSKELGRG…AAEVLKHPWL (259 aa). Residues 79 to 87 and lysine 102 contribute to the ATP site; that span reads LGRGQFGVT. Aspartate 197 acts as the Proton acceptor in catalysis. Phosphoserine is present on serine 237. Positions 337-367 are autoinhibitory domain; sequence ASDKPIDSAVLSRMKQFRAMNKLKKLALKVI. EF-hand domains follow at residues 374 to 409, 410 to 445, 446 to 481, and 482 to 516; these read EEIQ…LGSR, LTEA…RHRL, ESNE…YGMG, and DDAT…GNPQ. Positions 387, 389, 391, 393, 398, 423, 425, 427, 429, 434, 459, 461, 463, 465, 470, 494, 496, 498, 500, and 505 each coordinate Ca(2+).

The protein belongs to the protein kinase superfamily. Ser/Thr protein kinase family. CDPK subfamily. As to quaternary structure, interacts with THI1. Interacts with FD and FDP. Post-translationally, autophosphorylated. As to expression, expressed in primary roots, leaves, inflorescences, siliques and guard cells. Expressed in the shoot apical meristem.

It is found in the cell membrane. Its subcellular location is the nucleus. The protein localises to the cytoplasm. It catalyses the reaction L-seryl-[protein] + ATP = O-phospho-L-seryl-[protein] + ADP + H(+). The enzyme catalyses L-threonyl-[protein] + ATP = O-phospho-L-threonyl-[protein] + ADP + H(+). Its activity is regulated as follows. Activated by calcium. Autophosphorylation may play an important role in the regulation of the kinase activity. Repressed by THI1 through a negative regulation of the autophosphorylation activity in the presence of Ca(2+). Its function is as follows. Ca(2+)-dependent protein kinase. Negative regulator of stomatal closure and slow anion currents. Unable to phosphorylate THI1 in vitro, but the kinase activity is essential for the stomatal closure regulation. Phosphorylates FD. May play a role in signal transduction pathways that involve calcium as a second messenger. This Arabidopsis thaliana (Mouse-ear cress) protein is Calcium-dependent protein kinase 33.